The following is a 479-amino-acid chain: Ribosomal RNA small subunit methyltransferase F (479 aa).

S-adenosyl-L-methionine-binding positions include 125 to 131, E149, D176, and D194; that span reads AAAPGSK. C247 acts as the Nucleophile in catalysis.

The protein belongs to the class I-like SAM-binding methyltransferase superfamily. RsmB/NOP family.

It is found in the cytoplasm. The catalysed reaction is cytidine(1407) in 16S rRNA + S-adenosyl-L-methionine = 5-methylcytidine(1407) in 16S rRNA + S-adenosyl-L-homocysteine + H(+). Its function is as follows. Specifically methylates the cytosine at position 1407 (m5C1407) of 16S rRNA. This is Ribosomal RNA small subunit methyltransferase F from Shigella boydii serotype 4 (strain Sb227).